The sequence spans 285 residues: Iodotyrosine deiodinase 1 (285 aa).

Residues 1-21 (MFLLTPVLVAVVCILVIWVFK) form a helical membrane-spanning segment. Residues 96–100 (RRSIR) and 124–125 (SG) each bind FMN. 3,5-diiodo-L-tyrosine is bound by residues alanine 126, glutamate 153, tyrosine 157, and lysine 178. 3-iodo-L-tyrosine contacts are provided by alanine 126, glutamate 153, tyrosine 157, and lysine 178. Residues 233-235 (TTT) and arginine 275 each bind FMN.

Belongs to the nitroreductase family. Homodimer. Requires FMN as cofactor.

It localises to the cell membrane. It is found in the cytoplasmic vesicle membrane. The enzyme catalyses 2 iodide + L-tyrosine + 2 NADP(+) = 3,5-diiodo-L-tyrosine + 2 NADPH + H(+). It catalyses the reaction iodide + L-tyrosine + NADP(+) = 3-iodo-L-tyrosine + NADPH. It carries out the reaction 3-iodo-L-tyrosine + iodide + NADP(+) = 3,5-diiodo-L-tyrosine + NADPH + H(+). The catalysed reaction is L-tyrosine + chloride + NADP(+) = 3-chloro-L-tyrosine + NADPH. The enzyme catalyses bromide + L-tyrosine + NADP(+) = 3-bromo-L-tyrosine + NADPH. Catalyzes the dehalogenation of halotyrosines such as 3-bromo-L-tyrosine, 3-chloro-L-tyrosine, 3-iodo-L-tyrosine and 3,5-diiodo-L-tyrosine. During thyroid hormone biosynthesis, facilitates iodide salvage by catalysing the oxidative NADPH-dependent deiodination of the halogenated by-products of thyroid hormone production, monoiodotyrosine (L-MIT) and diiodotyrosine (L-DIT). The scavanged iodide can then reenter the hormone-producing pathways. Acts more efficiently on 3-iodo-L-tyrosine than 3,5-diiodo-L-tyrosine. The polypeptide is Iodotyrosine deiodinase 1 (Iyd) (Rattus norvegicus (Rat)).